The chain runs to 147 residues: Large ribosomal subunit protein uL11 (147 aa).

It belongs to the universal ribosomal protein uL11 family. In terms of assembly, part of the ribosomal stalk of the 50S ribosomal subunit. Interacts with L10 and the large rRNA to form the base of the stalk. L10 forms an elongated spine to which L12 dimers bind in a sequential fashion forming a multimeric L10(L12)X complex. Post-translationally, one or more lysine residues are methylated.

Forms part of the ribosomal stalk which helps the ribosome interact with GTP-bound translation factors. This Corynebacterium aurimucosum (strain ATCC 700975 / DSM 44827 / CIP 107346 / CN-1) (Corynebacterium nigricans) protein is Large ribosomal subunit protein uL11.